Reading from the N-terminus, the 248-residue chain is tRNA uridine(34) hydroxylase (248 aa).

In terms of domain architecture, Rhodanese spans 124 to 218 (TKQDVIVVDT…YLEDTQNKNN (95 aa)). Cys-178 acts as the Cysteine persulfide intermediate in catalysis.

It belongs to the TrhO family.

The enzyme catalyses uridine(34) in tRNA + AH2 + O2 = 5-hydroxyuridine(34) in tRNA + A + H2O. In terms of biological role, catalyzes oxygen-dependent 5-hydroxyuridine (ho5U) modification at position 34 in tRNAs. This chain is tRNA uridine(34) hydroxylase, found in Rickettsia bellii (strain OSU 85-389).